The sequence spans 361 residues: Isopentenyl-diphosphate delta-isomerase (361 aa).

Arg12–Lys13 serves as a coordination point for substrate. FMN contacts are provided by residues Ser70, Ser71–Thr73, Ser101, and Asn130. Ser101 to Arg103 is a binding site for substrate. Gln165 is a substrate binding site. Glu166 provides a ligand contact to Mg(2+). Residues Lys197 and Ala310–Gly311 each bind FMN.

The protein belongs to the IPP isomerase type 2 family. As to quaternary structure, homooctamer. Dimer of tetramers. FMN is required as a cofactor. Requires NADPH as cofactor. It depends on Mg(2+) as a cofactor.

It localises to the cytoplasm. It carries out the reaction isopentenyl diphosphate = dimethylallyl diphosphate. Its function is as follows. Involved in the biosynthesis of isoprenoids. Catalyzes the 1,3-allylic rearrangement of the homoallylic substrate isopentenyl (IPP) to its allylic isomer, dimethylallyl diphosphate (DMAPP). The polypeptide is Isopentenyl-diphosphate delta-isomerase (Chlorobium luteolum (strain DSM 273 / BCRC 81028 / 2530) (Pelodictyon luteolum)).